The following is a 166-amino-acid chain: Transcriptional repressor NrdR (166 aa).

Residues 3 to 34 (CPFCGFSDSRVLDSRPTVEGNSIRRRRECCGC) fold into a zinc finger. The ATP-cone domain maps to 49 to 139 (LIVVKKDGRR…VYREFRDAES (91 aa)).

It belongs to the NrdR family. Zn(2+) is required as a cofactor.

Functionally, negatively regulates transcription of bacterial ribonucleotide reductase nrd genes and operons by binding to NrdR-boxes. The sequence is that of Transcriptional repressor NrdR from Pelotomaculum thermopropionicum (strain DSM 13744 / JCM 10971 / SI).